A 357-amino-acid chain; its full sequence is 3-isopropylmalate dehydrogenase (357 aa).

Substrate is bound by residues Arg99, Arg109, Arg133, and Asp223. The Mg(2+) site is built by Asp223, Asp247, and Asp251. Residue Gly283 to Asp295 participates in NAD(+) binding.

This sequence belongs to the isocitrate and isopropylmalate dehydrogenases family. LeuB type 2 subfamily. As to quaternary structure, homodimer. Mg(2+) serves as cofactor. It depends on Mn(2+) as a cofactor.

The protein resides in the cytoplasm. The enzyme catalyses (2R,3S)-3-isopropylmalate + NAD(+) = 4-methyl-2-oxopentanoate + CO2 + NADH. The protein operates within amino-acid biosynthesis; L-leucine biosynthesis; L-leucine from 3-methyl-2-oxobutanoate: step 3/4. In terms of biological role, catalyzes the oxidation of 3-carboxy-2-hydroxy-4-methylpentanoate (3-isopropylmalate) to 3-carboxy-4-methyl-2-oxopentanoate. The product decarboxylates to 4-methyl-2 oxopentanoate. This Leifsonia xyli subsp. xyli (strain CTCB07) protein is 3-isopropylmalate dehydrogenase.